We begin with the raw amino-acid sequence, 808 residues long: Piwi-like protein 1 (808 aa).

A PAZ domain is found at R214 to G333. Residues S300–L322 form a disordered region. The 299-residue stretch at H492–R790 folds into the Piwi domain.

This sequence belongs to the argonaute family. Piwi subfamily. As to expression, expressed in dividing adult somatic stem cells (neoblasts).

The polypeptide is Piwi-like protein 1 (wi-1) (Schmidtea mediterranea (Freshwater planarian flatworm)).